A 174-amino-acid chain; its full sequence is Nicotinamide-nucleotide adenylyltransferase (174 aa).

Belongs to the archaeal NMN adenylyltransferase family.

The protein localises to the cytoplasm. It carries out the reaction beta-nicotinamide D-ribonucleotide + ATP + H(+) = diphosphate + NAD(+). Its pathway is cofactor biosynthesis; NAD(+) biosynthesis; NAD(+) from nicotinamide D-ribonucleotide: step 1/1. This is Nicotinamide-nucleotide adenylyltransferase from Archaeoglobus fulgidus (strain ATCC 49558 / DSM 4304 / JCM 9628 / NBRC 100126 / VC-16).